The primary structure comprises 116 residues: Large ribosomal subunit protein uL22 (116 aa).

It belongs to the universal ribosomal protein uL22 family. In terms of assembly, part of the 50S ribosomal subunit.

This protein binds specifically to 23S rRNA; its binding is stimulated by other ribosomal proteins, e.g. L4, L17, and L20. It is important during the early stages of 50S assembly. It makes multiple contacts with different domains of the 23S rRNA in the assembled 50S subunit and ribosome. In terms of biological role, the globular domain of the protein is located near the polypeptide exit tunnel on the outside of the subunit, while an extended beta-hairpin is found that lines the wall of the exit tunnel in the center of the 70S ribosome. The sequence is that of Large ribosomal subunit protein uL22 from Wolbachia pipientis subsp. Culex pipiens (strain wPip).